The sequence spans 375 residues: OVARIAN TUMOR DOMAIN-containing deubiquitinating enzyme 7 (375 aa).

Over residues 1-18 (MAKTKQQKSKPKKQPHQK) the composition is skewed to basic residues. Residues 1–23 (MAKTKQQKSKPKKQPHQKQGKDC) form a disordered region. The OTU domain maps to 37–161 (LKIIQVTADG…GEHYNSVRSK (125 aa)). Residue Asp-45 is part of the active site. Cys-48 serves as the catalytic Nucleophile. His-154 is a catalytic residue. Positions 202–250 (HVNAGAIKVVMSGSCCDNTEKAEQVLLQVNGDVDAAIEFLIADQGMESL) constitute a UBA-like domain. 2 stretches are compositionally biased toward polar residues: residues 251-264 (TEND…SDTI) and 290-305 (ASGN…CTTQ). The segment at 251-306 (TENDTETASASDTINPKHASDSPMENTEQAREELIEEESASGNNSETVQAKCTTQT) is disordered. The Nuclear localization signal signature appears at 308–315 (DKKIPRNK).

Belongs to the peptidase C85 family.

Its subcellular location is the nucleus. It catalyses the reaction Thiol-dependent hydrolysis of ester, thioester, amide, peptide and isopeptide bonds formed by the C-terminal Gly of ubiquitin (a 76-residue protein attached to proteins as an intracellular targeting signal).. Hydrolase that can remove conjugated ubiquitin from proteins in vitro and may therefore play an important regulatory role at the level of protein turnover by preventing degradation. Cysteine protease with a preference for 'Lys-63' over 'Lys-48' over 'Met-1' -linked ubiquitin (UB) tetramers as substrates. Also cleaves RUB-GST fusion. This Arabidopsis thaliana (Mouse-ear cress) protein is OVARIAN TUMOR DOMAIN-containing deubiquitinating enzyme 7.